Reading from the N-terminus, the 310-residue chain is MLDANKLQQAVDQAYTQFHSLNGGQNADYIPFLANVPGQLAAVAIVTCDGNVYSAGDSDYRFALESISKVCTLALALEDVGPQAVQDKIGADPTGLPFNSVIALELHGGKPLSPLVNAGAIATTSLINAENVEQRWQRILHIQQQLAGEQVALSDEVNQSEQTTNFHNRAIAWLLYSAGYLYCDAMEACDVYTRQCSTLLNTIELATLGATLAAGGVNPLTHKRVLQADNVPYILAEMMMEGLYGRSGDWAYRVGLPGKSGVGGGILAVVPGVMGIAAFSPPLDEDGNSVRGQKMVASVAKQLGYNVFKG.

S66, N117, E161, N168, Y192, Y244, and V262 together coordinate substrate. At K294 the chain carries N6-acetyllysine.

It belongs to the glutaminase family. Homotetramer.

The enzyme catalyses L-glutamine + H2O = L-glutamate + NH4(+). This chain is Glutaminase 1, found in Escherichia coli (strain K12).